The following is a 201-amino-acid chain: MELVLKDAQSALEVSEATFGRDFNEALVHQVVVAYAANARQGTRAQKTRAEVTGSGKKPWRQKGTGRARAGTVKGPIWRGGGVTFAAKTQDHSQKVNKKMYRGALKSIFSELVRQDRLIVVESFGVDAPKTKELKAKLDAMQLQDVLIVTPEVDENLFLAARNLYKVDVRDVAGVDPVSLIAFDKVLVTAEAIKQIEEMLG.

The segment at 45-71 (AQKTRAEVTGSGKKPWRQKGTGRARAG) is disordered.

This sequence belongs to the universal ribosomal protein uL4 family. Part of the 50S ribosomal subunit.

Its function is as follows. One of the primary rRNA binding proteins, this protein initially binds near the 5'-end of the 23S rRNA. It is important during the early stages of 50S assembly. It makes multiple contacts with different domains of the 23S rRNA in the assembled 50S subunit and ribosome. In terms of biological role, forms part of the polypeptide exit tunnel. This chain is Large ribosomal subunit protein uL4, found in Shewanella halifaxensis (strain HAW-EB4).